The primary structure comprises 196 residues: Endonuclease V (196 aa).

2 residues coordinate Mg(2+): Asp-37 and Asp-98.

Belongs to the endonuclease V family. The cofactor is Mg(2+).

The protein localises to the cytoplasm. The catalysed reaction is Endonucleolytic cleavage at apurinic or apyrimidinic sites to products with a 5'-phosphate.. Functionally, DNA repair enzyme involved in the repair of deaminated bases. Selectively cleaves double-stranded DNA at the second phosphodiester bond 3' to a deoxyinosine leaving behind the intact lesion on the nicked DNA. This Sulfurisphaera tokodaii (strain DSM 16993 / JCM 10545 / NBRC 100140 / 7) (Sulfolobus tokodaii) protein is Endonuclease V.